Consider the following 713-residue polypeptide: Zinc finger and BTB domain-containing protein 1 (713 aa).

A Glycyl lysine isopeptide (Lys-Gly) (interchain with G-Cter in SUMO2) cross-link involves residue lysine 3. Residues 24-91 (CDCCIAIDDI…MYLGKIMTAP (68 aa)) form the BTB domain. Residues lysine 200 and lysine 205 each participate in a glycyl lysine isopeptide (Lys-Gly) (interchain with G-Cter in SUMO2) cross-link. A C2H2-type 1; atypical zinc finger spans residues 216–242 (FTCDSCGFGFSCEKLLDEHVLTCTNRH). Residues lysine 261, lysine 266, lysine 276, lysine 284, lysine 304, lysine 316, lysine 328, lysine 340, and lysine 346 each participate in a glycyl lysine isopeptide (Lys-Gly) (interchain with G-Cter in SUMO2) cross-link. The segment at 270–319 (AEKDSSKTFSAQPDKYREDANQAPDDSASTTGSRKSTVEAGIAGEEKSRA) is disordered. Position 355 is a phosphoserine (serine 355). Threonine 356 is subject to Phosphothreonine. A Glycyl lysine isopeptide (Lys-Gly) (interchain with G-Cter in SUMO2) cross-link involves residue lysine 381. The C2H2-type 2; atypical zinc finger occupies 448 to 470 (CACGKCGQILVKGRQLQEHAQRC). Lysine 528 is covalently cross-linked (Glycyl lysine isopeptide (Lys-Gly) (interchain with G-Cter in SUMO2)). Residues 533 to 558 (PFRCPNCGQRFETENLVVEHMSSCLD) form a UBZ-type zinc finger. A Glycyl lysine isopeptide (Lys-Gly) (interchain with G-Cter in SUMO2) cross-link involves residue lysine 563. 5 consecutive C2H2-type zinc fingers follow at residues 578–600 (HFCN…YTVH), 606–628 (FVCQ…NDMH), 634–656 (YVCS…MISH), 662–684 (TICQ…MDVH), and 686–709 (YTCG…NAKH).

As to quaternary structure, homodimer. Homodimer. Interacts (via BTB domain) with TRIM28 (unphosphorylated or phosphorylated form). Sumoylated with SUMO2 at Lys-328 and to a lesser extent at Lys-266. Sumoylation inhibits its transcriptional repression activity and regulates its subcellular localization. In terms of tissue distribution, expressed strongly in thymus and spleen, less in lymph nodes and peripheral blood mononuclear cells (PBMCs) and weakly in bone marrow. Strongly expressed in immature, but weakly in mature bone marrow-lymphocyte B.

Its subcellular location is the nucleus. The protein localises to the nucleoplasm. Its function is as follows. Acts as a transcriptional repressor. Represses cAMP-responsive element (CRE)-mediated transcriptional activation. In addition, has a role in translesion DNA synthesis. Requires for UV-inducible RAD18 loading, PCNA monoubiquitination, POLH recruitment to replication factories and efficient translesion DNA synthesis. Plays a key role in the transcriptional regulation of T lymphocyte development. In Mus musculus (Mouse), this protein is Zinc finger and BTB domain-containing protein 1 (Zbtb1).